Reading from the N-terminus, the 148-residue chain is Cytochrome c oxidase subunit 4, mitochondrial (148 aa).

Residues 1-24 constitute a mitochondrion transit peptide; that stretch reads MFALRSIRSATKAFQTTSIVSQRG.

As to quaternary structure, slime mold cytochrome c oxidase consists of at least seven different polypeptides species, subunits I, II, III, IV, V, VI, and VIIe/s in order of MW.

It localises to the mitochondrion inner membrane. The enzyme catalyses 4 Fe(II)-[cytochrome c] + O2 + 8 H(+)(in) = 4 Fe(III)-[cytochrome c] + 2 H2O + 4 H(+)(out). This protein is one of the nuclear-coded polypeptide chains of cytochrome c oxidase, the terminal oxidase in mitochondrial electron transport. This Dictyostelium discoideum (Social amoeba) protein is Cytochrome c oxidase subunit 4, mitochondrial (cxdA).